Reading from the N-terminus, the 149-residue chain is Urease accessory protein UreE (149 aa).

Belongs to the UreE family.

Its subcellular location is the cytoplasm. Involved in urease metallocenter assembly. Binds nickel. Probably functions as a nickel donor during metallocenter assembly. In Prochlorococcus marinus (strain MIT 9301), this protein is Urease accessory protein UreE.